We begin with the raw amino-acid sequence, 321 residues long: Ferredoxin--NADP reductase (321 aa).

FAD contacts are provided by Asp28, Gln36, Tyr41, Ala81, Phe115, Asp274, and Ser315.

Belongs to the ferredoxin--NADP reductase type 2 family. As to quaternary structure, homodimer. FAD serves as cofactor.

The enzyme catalyses 2 reduced [2Fe-2S]-[ferredoxin] + NADP(+) + H(+) = 2 oxidized [2Fe-2S]-[ferredoxin] + NADPH. In Frankia alni (strain DSM 45986 / CECT 9034 / ACN14a), this protein is Ferredoxin--NADP reductase.